Reading from the N-terminus, the 360-residue chain is Phospho-N-acetylmuramoyl-pentapeptide-transferase (360 aa).

The next 10 membrane-spanning stretches (helical) occupy residues 26-46, 70-90, 94-114, 132-152, 168-188, 199-219, 239-259, 263-283, 288-308, and 338-358; these read AIMSVLTALILSLWMGPRLIA, GTPTMGGIMILAAITITALLW, SNPYIWAVLAVMLGYGVVGFV, WKYFWQSVIALVIAFALYMHG, VMPQLGLLYIVLTYFVIVGTS, GLAIMPTVMVAGGMAFIAWAT, LVVLCTAIVGAGLGFLWFNTY, VFMGDVGSLALGGALGTIAVL, LLLVIMGGVFVMETVSVILQV, and VIVRFWIITLMLVLIALATLK.

The protein belongs to the glycosyltransferase 4 family. MraY subfamily. Mg(2+) serves as cofactor.

The protein resides in the cell inner membrane. The enzyme catalyses UDP-N-acetyl-alpha-D-muramoyl-L-alanyl-gamma-D-glutamyl-meso-2,6-diaminopimeloyl-D-alanyl-D-alanine + di-trans,octa-cis-undecaprenyl phosphate = di-trans,octa-cis-undecaprenyl diphospho-N-acetyl-alpha-D-muramoyl-L-alanyl-D-glutamyl-meso-2,6-diaminopimeloyl-D-alanyl-D-alanine + UMP. It participates in cell wall biogenesis; peptidoglycan biosynthesis. Functionally, catalyzes the initial step of the lipid cycle reactions in the biosynthesis of the cell wall peptidoglycan: transfers peptidoglycan precursor phospho-MurNAc-pentapeptide from UDP-MurNAc-pentapeptide onto the lipid carrier undecaprenyl phosphate, yielding undecaprenyl-pyrophosphoryl-MurNAc-pentapeptide, known as lipid I. This Photobacterium profundum (strain SS9) protein is Phospho-N-acetylmuramoyl-pentapeptide-transferase.